Here is a 711-residue protein sequence, read N- to C-terminus: Ribosomal RNA large subunit methyltransferase K/L (711 aa).

One can recognise a THUMP domain in the interval 43–154; sequence TLYRTLLWSR…RENLVISLDL (112 aa).

The protein belongs to the methyltransferase superfamily. RlmKL family.

It is found in the cytoplasm. The catalysed reaction is guanosine(2445) in 23S rRNA + S-adenosyl-L-methionine = N(2)-methylguanosine(2445) in 23S rRNA + S-adenosyl-L-homocysteine + H(+). It carries out the reaction guanosine(2069) in 23S rRNA + S-adenosyl-L-methionine = N(2)-methylguanosine(2069) in 23S rRNA + S-adenosyl-L-homocysteine + H(+). Specifically methylates the guanine in position 2445 (m2G2445) and the guanine in position 2069 (m7G2069) of 23S rRNA. The chain is Ribosomal RNA large subunit methyltransferase K/L from Haemophilus influenzae (strain 86-028NP).